Reading from the N-terminus, the 340-residue chain is L-threonine 3-dehydrogenase (340 aa).

Cys-38 is a binding site for Zn(2+). Catalysis depends on charge relay system residues Thr-40 and His-43. The Zn(2+) site is built by His-63, Glu-64, Cys-93, Cys-96, Cys-99, and Cys-107. NAD(+) contacts are provided by residues Ile-175, Asp-195, Arg-200, 262 to 264, and 286 to 287; these read LGI and IY.

This sequence belongs to the zinc-containing alcohol dehydrogenase family. Homotetramer. Zn(2+) is required as a cofactor.

The protein resides in the cytoplasm. It carries out the reaction L-threonine + NAD(+) = (2S)-2-amino-3-oxobutanoate + NADH + H(+). It participates in amino-acid degradation; L-threonine degradation via oxydo-reductase pathway; glycine from L-threonine: step 1/2. Catalyzes the NAD(+)-dependent oxidation of L-threonine to 2-amino-3-ketobutyrate. The sequence is that of L-threonine 3-dehydrogenase from Legionella pneumophila (strain Corby).